The primary structure comprises 307 residues: Mitochondrial brown fat uncoupling protein 1 (307 aa).

The Mitochondrial intermembrane segment spans residues 1–10; the sequence is MVSLTTSEVH. A helical transmembrane segment spans residues 11–32; the sequence is PTMGVKTFSAGISACLADIITF. Solcar repeat units lie at residues 11–102, 111–201, and 210–295; these read PTMG…VQEY, PTLG…MKGA, and DDVP…LKKE. Over 33 to 73 the chain is Mitochondrial matrix; that stretch reads PLDTAKVRLQIQGEGQTSSTIRYKGVLGTITTLAKTEGWPK. Lysine 56 provides a ligand contact to fatty acid 16:0. Residues 74 to 96 traverse the membrane as a helical segment; sequence LYSGLPAGIQRQISFASLRIGLY. Topologically, residues 97–116 are mitochondrial intermembrane; that stretch reads DTVQEYFSSGKETPPTLGNR. The chain crosses the membrane as a helical span at residues 117 to 133; it reads ISAGLMTGGVAVFIGQP. At 134-178 the chain is on the mitochondrial matrix side; it reads TEVVKVRLQAQSHLHGIKPRYTGTYNAYRIIATTESFSTLWKGTT. Residues 179–195 form a helical membrane-spanning segment; sequence PNLMRNVIINRTELVTY. Over 196 to 212 the chain is Mitochondrial intermembrane; it reads DLMKGALVNNQILADDV. The chain crosses the membrane as a helical span at residues 213 to 232; that stretch reads PCHLLSALVAGFCTTFLASP. Residues 233 to 266 are Mitochondrial matrix-facing; the sequence is ADVVKTRFINSLPGQYPSVPSCAMTMLTKEGPTA. Residue cysteine 254 is modified to Cysteine sulfenic acid (-SOH). A helical transmembrane segment spans residues 267-289; that stretch reads FFKGFVPSFLRLASWNVIMFVCF. Fatty acid 16:0 is bound at residue lysine 269. Over 290-307 the chain is Mitochondrial intermembrane; that stretch reads EQLKKELMKSRQTMDCTT.

The protein belongs to the mitochondrial carrier (TC 2.A.29) family. As to quaternary structure, most probably functions as a monomer. Binds one purine nucleotide per monomer. However, has also been suggested to function as a homodimer or a homotetramer. Tightly associates with cardiolipin in the mitochondrion inner membrane; may stabilize and regulate its activity. May undergo sulfenylation upon cold exposure. May increase the sensitivity of UCP1 thermogenic function to the activation by noradrenaline probably through structural effects. In terms of processing, may undergo ubiquitin-mediated proteasomal degradation.

The protein localises to the mitochondrion inner membrane. The enzyme catalyses H(+)(in) = H(+)(out). Has no constitutive proton transporter activity and has to be activated by long-chain fatty acids/LCFAs. Inhibited by purine nucleotides. Both purine nucleotides and LCFAs bind the cytosolic side of the transporter and directly compete to activate or inhibit it. Activated by noradrenaline and reactive oxygen species. Despite lacking canonical translational encoding for selenocysteine, a small pool of the protein has been observed to selectively incorporate selenocysteine at 'Cys-254'. Selenocysteine-modified protein is highly sensitive to redox modification and may constitute a pool of protein highly sensitive to activation by elevated levels of reactive oxygen species (ROS). In terms of biological role, mitochondrial protein responsible for thermogenic respiration, a specialized capacity of brown adipose tissue and beige fat that participates in non-shivering adaptive thermogenesis to temperature and diet variations and more generally to the regulation of energy balance. Functions as a long-chain fatty acid/LCFA and proton symporter, simultaneously transporting one LCFA and one proton through the inner mitochondrial membrane. However, LCFAs remaining associated with the transporter via their hydrophobic tails, it results in an apparent transport of protons activated by LCFAs. Thereby, dissipates the mitochondrial proton gradient and converts the energy of substrate oxydation into heat instead of ATP. Regulates the production of reactive oxygen species/ROS by mitochondria. In Dicrostonyx groenlandicus (Northern collared lemming), this protein is Mitochondrial brown fat uncoupling protein 1.